A 604-amino-acid polypeptide reads, in one-letter code: uncharacterized protein (604 aa).

The signal sequence occupies residues 1–19; it reads MIVRILLLFIALFTFGVQA.

This sequence to H.influenzae HbpA.

This is an uncharacterized protein from Escherichia coli (strain K12).